The chain runs to 467 residues: Plasma alpha-L-fucosidase (467 aa).

A signal peptide spans 1–28 (MRPQELPRLAFPLLLLLLLLLPPPPCPA). Asn-171 and Asn-239 each carry an N-linked (GlcNAc...) asparagine glycan. Phosphoserine; by FAM20C is present on Ser-301. A glycan (N-linked (GlcNAc...) asparagine) is linked at Asn-377.

The protein belongs to the glycosyl hydrolase 29 family. Homotetramer.

Its subcellular location is the secreted. It catalyses the reaction an alpha-L-fucoside + H2O = L-fucose + an alcohol. Alpha-L-fucosidase is responsible for hydrolyzing the alpha-1,6-linked fucose joined to the reducing-end N-acetylglucosamine of the carbohydrate moieties of glycoproteins. The protein is Plasma alpha-L-fucosidase (FUCA2) of Homo sapiens (Human).